A 206-amino-acid chain; its full sequence is Ras-related protein RABH1a (206 aa).

GTP is bound at residue 14 to 21 (GDQGVGKT). Residues 36-44 (YQATIGIDF) carry the Effector region motif. Residues 62–66 (DTAGQ), 120–123 (NKTD), and 150–151 (SA) each bind GTP. S-geranylgeranyl cysteine attachment occurs at residues Cys-204 and Cys-206. Cysteine methyl ester is present on Cys-206.

The protein belongs to the small GTPase superfamily. Rab family.

The protein localises to the golgi apparatus membrane. In terms of biological role, protein transport. Regulator of membrane traffic from the Golgi apparatus towards the endoplasmic reticulum (ER). The protein is Ras-related protein RABH1a (RABH1A) of Arabidopsis thaliana (Mouse-ear cress).